We begin with the raw amino-acid sequence, 229 residues long: uncharacterized protein (229 aa).

The 55-residue stretch at 24–78 (LRKWRSIFNASQSDLARKLGISPSVISDYESGRRKPGTAFLKKFVCALIELDGER) folds into the HTH cro/C1-type domain. Residues 35–54 (QSDLARKLGISPSVISDYES) constitute a DNA-binding region (H-T-H motif).

This is an uncharacterized protein from Archaeoglobus fulgidus (strain ATCC 49558 / DSM 4304 / JCM 9628 / NBRC 100126 / VC-16).